The primary structure comprises 754 residues: Subtilisin-like protease SBT3.12 (754 aa).

A signal peptide spans methionine 1–alanine 28. Positions glutamine 29–glutamine 117 are cleaved as a propeptide — activation peptide. The 78-residue stretch at tyrosine 39–leucine 116 folds into the Inhibitor I9 domain. The 486-residue stretch at isoleucine 121–lysine 606 folds into the Peptidase S8 domain. Catalysis depends on aspartate 151, which acts as the Charge relay system. A glycan (N-linked (GlcNAc...) asparagine) is linked at asparagine 206. Histidine 224 (charge relay system) is an active-site residue. Residues asparagine 239 and asparagine 369 are each glycosylated (N-linked (GlcNAc...) asparagine). The Charge relay system role is filled by serine 537. 2 N-linked (GlcNAc...) asparagine glycosylation sites follow: asparagine 629 and asparagine 740.

The protein belongs to the peptidase S8 family.

It is found in the secreted. The sequence is that of Subtilisin-like protease SBT3.12 from Arabidopsis thaliana (Mouse-ear cress).